The following is a 267-amino-acid chain: Actin maturation protease (267 aa).

The segment at 1 to 32 is disordered; the sequence is MSNISSVAPPPPPPPMIVTPSTPATTKERPVG. The span at 8-17 shows a compositional bias: pro residues; sequence APPPPPPPMI. Positions 74-188 are peptidase C39-like; sequence SIVQVGPTCG…WALIVGYLVD (115 aa). C82 is an active-site residue.

This sequence belongs to the ACTMAP family.

The enzyme catalyses N-terminal N(alpha)-acetyl-L-cysteinyl-L-aspartyl-[protein] + H2O = N-terminal L-aspartyl-[protein] + N-acetyl-L-cysteine. In terms of biological role, actin maturation protease that specifically mediates the cleavage of immature acetylated N-terminal actin, thereby contributing to actin maturation. The sequence is that of Actin maturation protease from Drosophila melanogaster (Fruit fly).